The primary structure comprises 522 residues: Maturase K (522 aa).

The protein belongs to the intron maturase 2 family. MatK subfamily.

It localises to the plastid. The protein resides in the chloroplast. Its function is as follows. Usually encoded in the trnK tRNA gene intron. Probably assists in splicing its own and other chloroplast group II introns. The sequence is that of Maturase K from Micranthus junceus (Micranthus plantagineus var. junceus).